Here is a 279-residue protein sequence, read N- to C-terminus: Pantothenate synthetase (279 aa).

31–38 (MGNLHGGH) contacts ATP. Residue H38 is the Proton donor of the active site. Residue Q62 coordinates (R)-pantoate. Beta-alanine is bound at residue Q62. 150–153 (GRKD) is a binding site for ATP. Q156 contacts (R)-pantoate. ATP-binding positions include V179 and 187 to 190 (KSSR).

Belongs to the pantothenate synthetase family. As to quaternary structure, homodimer.

The protein resides in the cytoplasm. It carries out the reaction (R)-pantoate + beta-alanine + ATP = (R)-pantothenate + AMP + diphosphate + H(+). The protein operates within cofactor biosynthesis; (R)-pantothenate biosynthesis; (R)-pantothenate from (R)-pantoate and beta-alanine: step 1/1. Catalyzes the condensation of pantoate with beta-alanine in an ATP-dependent reaction via a pantoyl-adenylate intermediate. The chain is Pantothenate synthetase from Stenotrophomonas maltophilia (strain K279a).